We begin with the raw amino-acid sequence, 88 residues long: MAERRKYGKKYCKYTEMKVDFIDYKNTELLKLSMSERGKIMPRRLTGNSKNAQEMVEKAIKRARHMALVPYIVDTKNITDSAYARSFY.

Belongs to the bacterial ribosomal protein bS18 family. Part of the 30S ribosomal subunit. Forms a tight heterodimer with protein bS6.

Functionally, binds as a heterodimer with protein bS6 to the central domain of the 16S rRNA, where it helps stabilize the platform of the 30S subunit. This Aliarcobacter butzleri (strain RM4018) (Arcobacter butzleri) protein is Small ribosomal subunit protein bS18.